Reading from the N-terminus, the 124-residue chain is Translation initiation factor 5A (124 aa).

Residue K36 is modified to Hypusine.

Belongs to the eIF-5A family.

The protein resides in the cytoplasm. Functionally, functions by promoting the formation of the first peptide bond. This Haloquadratum walsbyi (strain DSM 16790 / HBSQ001) protein is Translation initiation factor 5A.